The sequence spans 117 residues: Minor capsid protein p17 (117 aa).

The N-linked (GlcNAc...) asparagine; by host glycan is linked to asparagine 12. A helical membrane pass occupies residues 39–59; the sequence is AIILGILILLVIILIIVAIVY. N-linked (GlcNAc...) asparagine; by host glycosylation is found at asparagine 61 and asparagine 97.

Belongs to the asfivirus minor capsid protein p17 family. In terms of assembly, interacts with the minor capsid protein M1249L and with the hexon capsid protein p72 capsomers; these interactions form a rigid zipper structure that stabilizes the capsomers. Interacts with host STING1.

The protein resides in the virion membrane. It is found in the host endoplasmic reticulum membrane. Together with the penton and the other minor capsid proteins (M1249L, p49), forms a complicated network immediately below the outer capsid shell, stabilizing the whole capsid. Three copies of p17 encircle each p72 capsomer in the inner capsid shell, anchoring p72 capsomers on the inner membrane. Required for the assembly of the capsid and icosahedral morphogenesis. Additionally, inhibits the host cGAS-STING pathway through its interaction with STING1 and subsequent interference of the recruitment of downstream components TBK1 and IKBKE. The polypeptide is Minor capsid protein p17 (Ornithodoros (relapsing fever ticks)).